A 390-amino-acid chain; its full sequence is Methylthioribose-1-phosphate isomerase (390 aa).

The active-site Proton donor is Asp258.

This sequence belongs to the eIF-2B alpha/beta/delta subunits family. MtnA subfamily.

It localises to the cytoplasm. The protein resides in the nucleus. It carries out the reaction 5-(methylsulfanyl)-alpha-D-ribose 1-phosphate = 5-(methylsulfanyl)-D-ribulose 1-phosphate. It functions in the pathway amino-acid biosynthesis; L-methionine biosynthesis via salvage pathway; L-methionine from S-methyl-5-thio-alpha-D-ribose 1-phosphate: step 1/6. Its function is as follows. Catalyzes the interconversion of methylthioribose-1-phosphate (MTR-1-P) into methylthioribulose-1-phosphate (MTRu-1-P). This is Methylthioribose-1-phosphate isomerase from Coccidioides posadasii (strain C735) (Valley fever fungus).